We begin with the raw amino-acid sequence, 432 residues long: Protein trichome birefringence-like 23 (432 aa).

A helical; Signal-anchor for type II membrane protein transmembrane segment spans residues 13–35 (QNTYLIKLVAATLITCLAFRFFV). The short motif at 153-155 (GDS) is the GDS motif element. Positions 404 to 418 (DCLHWCLPGPIDHLN) match the DCXHWCLPGXXDXWN motif motif.

Belongs to the PC-esterase family. TBL subfamily.

The protein localises to the membrane. In terms of biological role, may act as a bridging protein that binds pectin and other cell wall polysaccharides. Probably involved in maintaining esterification of pectins. May be involved in the specific O-acetylation of cell wall polymers. This chain is Protein trichome birefringence-like 23 (TBL23), found in Arabidopsis thaliana (Mouse-ear cress).